A 1285-amino-acid chain; its full sequence is DNA polymerase II large subunit (1285 aa).

The segment at 565 to 586 (TRIGGRMGRPGKSKPREMRPPP) is disordered.

This sequence belongs to the archaeal DNA polymerase II family. Heterodimer of a large subunit and a small subunit. Post-translationally, this protein undergoes a protein self splicing that involves a post-translational excision of the intervening region (intein) followed by peptide ligation.

The catalysed reaction is DNA(n) + a 2'-deoxyribonucleoside 5'-triphosphate = DNA(n+1) + diphosphate. It catalyses the reaction Exonucleolytic cleavage in the 3'- to 5'-direction to yield nucleoside 5'-phosphates.. Its function is as follows. Possesses two activities: a DNA synthesis (polymerase) and an exonucleolytic activity that degrades single-stranded DNA in the 3'- to 5'-direction. Has a template-primer preference which is characteristic of a replicative DNA polymerase. This chain is DNA polymerase II large subunit, found in Methanoculleus marisnigri (strain ATCC 35101 / DSM 1498 / JR1).